Consider the following 458-residue polypeptide: Chromosomal replication initiator protein DnaA (458 aa).

The interval 1–79 (MSLAIWQECL…ENPNHSVKIR (79 aa)) is domain I, interacts with DnaA modulators. Positions 79 to 120 (RLMVGNVSSVEKKPAKQIPTQAPLTNQPWEGESKAHRVPHKS) are domain II. The disordered stretch occupies residues 92-114 (PAKQIPTQAPLTNQPWEGESKAH). Positions 96–106 (IPTQAPLTNQP) are enriched in polar residues. Positions 121-338 (NLIKKYTFDN…GAIANISAKA (218 aa)) are domain III, AAA+ region. The ATP site is built by Gly-165, Gly-167, Lys-168, and Thr-169. The domain IV, binds dsDNA stretch occupies residues 339 to 458 (QFTGQGITIS…YKILIRTLSM (120 aa)).

This sequence belongs to the DnaA family. Oligomerizes as a right-handed, spiral filament on DNA at oriC.

Its subcellular location is the cytoplasm. Its function is as follows. Plays an essential role in the initiation and regulation of chromosomal replication. ATP-DnaA binds to the origin of replication (oriC) to initiate formation of the DNA replication initiation complex once per cell cycle. Binds the DnaA box (a 9 base pair repeat at the origin) and separates the double-stranded (ds)DNA. Forms a right-handed helical filament on oriC DNA; dsDNA binds to the exterior of the filament while single-stranded (ss)DNA is stabiized in the filament's interior. The ATP-DnaA-oriC complex binds and stabilizes one strand of the AT-rich DNA unwinding element (DUE), permitting loading of DNA polymerase. After initiation quickly degrades to an ADP-DnaA complex that is not apt for DNA replication. Binds acidic phospholipids. The chain is Chromosomal replication initiator protein DnaA from Psychromonas ingrahamii (strain DSM 17664 / CCUG 51855 / 37).